The chain runs to 277 residues: Caspase-3 (277 aa).

The residue at position 1 (Met1) is an N-acetylmethionine. 2 propeptides span residues 1 to 9 (MENTENSVD) and 10 to 28 (SKSI…KSVD). Lys11 carries the post-translational modification N6-acetyllysine. Phosphoserine is present on Ser26. Residues His121 and Cys163 contribute to the active site. Cys163 is modified (S-nitrosocysteine; in inhibited form).

This sequence belongs to the peptidase C14A family. Heterotetramer that consists of two anti-parallel arranged heterodimers, each one formed by a 17 kDa (p17) and a 12 kDa (p12) subunit. Interacts with BIRC6/bruce. Cleavage by granzyme B, caspase-6, caspase-8 and caspase-10 generates the two active subunits. Additional processing of the propeptides is likely due to the autocatalytic activity of the activated protease. Active heterodimers between the small subunit of caspase-7 protease and the large subunit of caspase-3 also occur and vice versa. Post-translationally, S-nitrosylated on its catalytic site cysteine in unstimulated cell lines and denitrosylated upon activation of the Fas apoptotic pathway, associated with an increase in intracellular caspase activity. Fas therefore activates caspase-3 not only by inducing the cleavage of the caspase zymogen to its active subunits, but also by stimulating the denitrosylation of its active site thiol. In terms of processing, ubiquitinated by BIRC6; this activity is inhibited by DIABLO/SMAC.

It is found in the cytoplasm. The catalysed reaction is Strict requirement for an Asp residue at positions P1 and P4. It has a preferred cleavage sequence of Asp-Xaa-Xaa-Asp-|- with a hydrophobic amino-acid residue at P2 and a hydrophilic amino-acid residue at P3, although Val or Ala are also accepted at this position.. With respect to regulation, inhibited by BIRC6; following inhibition of BIRC6-caspase binding by DIABLO/SMAC, BIRC6 is subjected to caspase cleavage, leading to an increase in active caspases. Involved in the activation cascade of caspases responsible for apoptosis execution. At the onset of apoptosis, it proteolytically cleaves poly(ADP-ribose) polymerase PARP1 at a '216-Asp-|-Gly-217' bond. Cleaves and activates sterol regulatory element binding proteins (SREBPs) between the basic helix-loop-helix leucine zipper domain and the membrane attachment domain. Cleaves and activates caspase-6, -7 and -9 (CASP6, CASP7 and CASP9, respectively). Cleaves and inactivates interleukin-18 (IL18). Triggers cell adhesion in sympathetic neurons through RET cleavage. Cleaves IL-1 beta between an Asp and an Ala, releasing the mature cytokine which is involved in a variety of inflammatory processes. Cleaves and inhibits serine/threonine-protein kinase AKT1 in response to oxidative stress. Acts as an inhibitor of type I interferon production during virus-induced apoptosis by mediating cleavage of antiviral proteins CGAS, IRF3 and MAVS, thereby preventing cytokine overproduction. Also involved in pyroptosis by mediating cleavage and activation of gasdermin-E (GSDME). Cleaves XRCC4 and phospholipid scramblase proteins XKR4, XKR8 and XKR9, leading to promote phosphatidylserine exposure on apoptotic cell surface. Cleaves BIRC6 following inhibition of BIRC6-caspase binding by DIABLO/SMAC. This is Caspase-3 (CASP3) from Macaca fascicularis (Crab-eating macaque).